Consider the following 400-residue polypeptide: Acetate kinase (400 aa).

Residue asparagine 7 participates in Mg(2+) binding. An ATP-binding site is contributed by lysine 14. Residue arginine 91 participates in substrate binding. Aspartate 148 acts as the Proton donor/acceptor in catalysis. ATP-binding positions include 208-212 (HIGNG), 283-285 (DFR), and 332-336 (GIGEH). Residue glutamate 387 participates in Mg(2+) binding.

This sequence belongs to the acetokinase family. As to quaternary structure, homodimer. Requires Mg(2+) as cofactor. It depends on Mn(2+) as a cofactor.

It is found in the cytoplasm. The catalysed reaction is acetate + ATP = acetyl phosphate + ADP. The protein operates within metabolic intermediate biosynthesis; acetyl-CoA biosynthesis; acetyl-CoA from acetate: step 1/2. Its function is as follows. Catalyzes the formation of acetyl phosphate from acetate and ATP. Can also catalyze the reverse reaction. This Clostridium beijerinckii (strain ATCC 51743 / NCIMB 8052) (Clostridium acetobutylicum) protein is Acetate kinase.